The following is a 479-amino-acid chain: MVGGKWRFLEVAVVVMVLQWSCDYNGNLAEGFPVQDLVTKLPGQPEVAFRQFAGYVDIDVKAGRSLFYYFVEAEKQPHSKPLTLWLNGGPGCSSIGGGAFTELGPFYPTGDARGLRRNPKSWNKASNLLFVDSPAGVGWSYSNTTSDYTTGDESTAKDMLVFMLRWLEKFPQFKTRNLFLAGESYAGHYVPQLADVILEYNAQRSNRFKFNLKGIAIGNPLLKLDRDVPAIYEFFWSHGMISDELGLTIMNQCDFEDYTFTDSHNISKLCEAAVNQAGTIITQYVNYYDILLDVCYPSLFEQELRLKKMGTRMSFGVDVCMSFEEQLYLNLPEVQKALHANRTKLPYEWSMCSSLLNYKYTDGNANMLPILKRIVKSKVPVWVFSGDEDSVIPLLGSRTLVKELADDLNFNTTVPYGAWFDKGQVGGWVVEYGNLLTFATVRGAAHMVPYSQPSRALHLFTSFVLGRKLPHKSPPALHD.

A signal peptide spans 1–22; it reads MVGGKWRFLEVAVVVMVLQWSC. Intrachain disulfides connect Cys-92/Cys-352, Cys-253/Cys-270, and Cys-295/Cys-320. An N-linked (GlcNAc...) asparagine glycan is attached at Asn-143. Residue Ser-184 is part of the active site. N-linked (GlcNAc...) asparagine glycosylation occurs at Asn-265. N-linked (GlcNAc...) asparagine glycosylation is present at Asn-341. Residue Asp-389 is part of the active site. Residue Asn-411 is glycosylated (N-linked (GlcNAc...) asparagine). The active site involves His-446.

It belongs to the peptidase S10 family. Expressed in seedlings.

The protein resides in the secreted. Its function is as follows. Probable carboxypeptidase. The sequence is that of Serine carboxypeptidase-like 44 (SCPL44) from Arabidopsis thaliana (Mouse-ear cress).